The chain runs to 98 residues: C-X-C motif chemokine 10 (98 aa).

The N-terminal stretch at 1–21 (MNQSAVLIFCLIFLTLNGTQG) is a signal peptide. A Citrulline modification is found at R26. Disulfide bonds link C30-C57 and C32-C74.

The protein belongs to the intercrine alpha (chemokine CxC) family. As to quaternary structure, monomer, dimer, and tetramer. Interacts with CXCR3 (via N-terminus).

It is found in the secreted. Functionally, pro-inflammatory cytokine that is involved in a wide variety of processes such as chemotaxis, differentiation, and activation of peripheral immune cells, regulation of cell growth, apoptosis and modulation of angiostatic effects. Plays thereby an important role during viral infections by stimulating the activation and migration of immune cells to the infected sites. Mechanistically, binding of CXCL10 to the CXCR3 receptor activates G protein-mediated signaling and results in downstream activation of phospholipase C-dependent pathway, an increase in intracellular calcium production and actin reorganization. In turn, recruitment of activated Th1 lymphocytes occurs at sites of inflammation. Activation of the CXCL10/CXCR3 axis also plays an important role in neurons in response to brain injury for activating microglia, the resident macrophage population of the central nervous system, and directing them to the lesion site. This recruitment is an essential element for neuronal reorganization. This chain is C-X-C motif chemokine 10 (CXCL10), found in Canis lupus familiaris (Dog).